Reading from the N-terminus, the 548-residue chain is Chaperonin GroEL (548 aa).

Residues 30-33 (TLGP), Lys51, 87-91 (DGTTT), Gly415, 479-481 (NAA), and Asp495 each bind ATP.

Belongs to the chaperonin (HSP60) family. Forms a cylinder of 14 subunits composed of two heptameric rings stacked back-to-back. Interacts with the co-chaperonin GroES.

It localises to the cytoplasm. The enzyme catalyses ATP + H2O + a folded polypeptide = ADP + phosphate + an unfolded polypeptide.. In terms of biological role, together with its co-chaperonin GroES, plays an essential role in assisting protein folding. The GroEL-GroES system forms a nano-cage that allows encapsulation of the non-native substrate proteins and provides a physical environment optimized to promote and accelerate protein folding. The chain is Chaperonin GroEL from Methylibium petroleiphilum (strain ATCC BAA-1232 / LMG 22953 / PM1).